A 139-amino-acid chain; its full sequence is Large ribosomal subunit protein uL16 (139 aa).

Over residues 1 to 17 the composition is skewed to basic residues; that stretch reads MLMPKRVKYRKSQRGRM. A disordered region spans residues 1–24; sequence MLMPKRVKYRKSQRGRMKGNSGRG.

This sequence belongs to the universal ribosomal protein uL16 family. Part of the 50S ribosomal subunit.

In terms of biological role, binds 23S rRNA and is also seen to make contacts with the A and possibly P site tRNAs. This Chlorobium limicola (strain DSM 245 / NBRC 103803 / 6330) protein is Large ribosomal subunit protein uL16.